A 223-amino-acid polypeptide reads, in one-letter code: Phosphoenolpyruvate guanylyltransferase (223 aa).

3 residues coordinate phosphoenolpyruvate: Thr140, Gly156, and Ser159.

The protein belongs to the CofC family.

The enzyme catalyses phosphoenolpyruvate + GTP + H(+) = enolpyruvoyl-2-diphospho-5'-guanosine + diphosphate. The protein operates within cofactor biosynthesis; coenzyme F420 biosynthesis. Its function is as follows. Guanylyltransferase that catalyzes the activation of phosphoenolpyruvate (PEP) as enolpyruvoyl-2-diphospho-5'-guanosine, via the condensation of PEP with GTP. It is involved in the biosynthesis of coenzyme F420, a hydride carrier cofactor. This Conexibacter woesei (strain DSM 14684 / CCUG 47730 / CIP 108061 / JCM 11494 / NBRC 100937 / ID131577) protein is Phosphoenolpyruvate guanylyltransferase.